We begin with the raw amino-acid sequence, 61 residues long: Cytotoxin homolog 2 (61 aa).

4 disulfide bridges follow: Cys-3–Cys-22, Cys-15–Cys-39, Cys-43–Cys-54, and Cys-55–Cys-60.

This sequence belongs to the three-finger toxin family. Short-chain subfamily. Orphan group XV sub-subfamily. In terms of tissue distribution, expressed by the venom gland.

It localises to the secreted. The protein resides in the target cell membrane. Has low cytotoxic activity. This is Cytotoxin homolog 2 from Naja melanoleuca (Forest cobra).